We begin with the raw amino-acid sequence, 330 residues long: Putative protein N-methyltransferase FAM86B1 (330 aa).

S-adenosyl-L-methionine contacts are provided by residues Trp139, 165–167 (GSG), Trp228, and Ala247.

It belongs to the class I-like SAM-binding methyltransferase superfamily. EEF2KMT family.

The protein is Putative protein N-methyltransferase FAM86B1 of Homo sapiens (Human).